The primary structure comprises 311 residues: MRNQEVINKAEMTLSTLESGGIMNPTQASTFIRMVQDTPTILRDARVIQMDHDTQKIEKIGFGQRILRAAQEGVALTKDQKSVPSTSTVNLSTKEVIAEVNITYDTLENNIEKDGLQNTIMQMIAERAAVDIEELLVNGDTSSSDSYLAQLDGIRKQATSHIVDAAGEELTRQTFKRGYKAVPPKYLRIPQEFRFYTSPGIEVEWKDRVADRQTNLGDAAVQGGLSSAFGVPIKGIANLQPYTIGEGDTAADVSDIILTHPKNIILGFSRNIRIEVDKDIRRRMFIIVLTAKLDSVFEEEDAVAKIVKVKE.

Belongs to the encapsulin family. Family 3 subfamily.

Possibly a prophage capsid protein. This Bacillus subtilis (strain 168) protein is Putative prophage capsid protein YqbE (yqbE).